The primary structure comprises 451 residues: Phosphoglucosamine mutase (451 aa).

The Phosphoserine intermediate role is filled by Ser-101. 4 residues coordinate Mg(2+): Ser-101, Asp-243, Asp-245, and Asp-247. Residue Ser-101 is modified to Phosphoserine.

This sequence belongs to the phosphohexose mutase family. The cofactor is Mg(2+). In terms of processing, activated by phosphorylation.

The catalysed reaction is alpha-D-glucosamine 1-phosphate = D-glucosamine 6-phosphate. In terms of biological role, catalyzes the conversion of glucosamine-6-phosphate to glucosamine-1-phosphate. In Thermodesulfovibrio yellowstonii (strain ATCC 51303 / DSM 11347 / YP87), this protein is Phosphoglucosamine mutase.